A 309-amino-acid polypeptide reads, in one-letter code: Taste receptor type 2 member 66 (309 aa).

Residue M1 is a topological domain, extracellular. Residues 2-22 form a helical membrane-spanning segment; that stretch reads ITFLPIIFSILIVVTFVIGNF. At 23-46 the chain is on the cytoplasmic side; the sequence is ANGFIALANSIEWFKRQKISFADQ. A helical transmembrane segment spans residues 47–67; it reads ILTALAVPRVGLLWVLLLNWY. The Extracellular portion of the chain corresponds to 68–86; that stretch reads ATELNPAFYSIEVRITAYN. A helical membrane pass occupies residues 87-107; it reads LWAVINHFSNWLATSLSIFYL. Residues 108 to 126 are Cytoplasmic-facing; the sequence is LKIANFSNLIFLRLKRRVK. The chain crosses the membrane as a helical span at residues 127–147; that stretch reads SVVLVILLGPLLFLVCHLFVI. Residues 148 to 178 lie on the Extracellular side of the membrane; the sequence is NMNQIIWTKEYEGNMTWKIKLRSAMYLSNTT. N-linked (GlcNAc...) asparagine glycosylation is found at N161 and N176. Residues 179–199 form a helical membrane-spanning segment; the sequence is VTILANLVPFTVTLISFLLLV. Residues 200–229 are Cytoplasmic-facing; that stretch reads CSLCKHLKKMQLHGKGSQDPSTKVHIKALQ. Residues 230 to 250 traverse the membrane as a helical segment; that stretch reads TVISFLLLCAIYFVSVIISVW. Topologically, residues 251-259 are extracellular; the sequence is SFKNLENKP. A helical transmembrane segment spans residues 260–280; sequence VFMFCQAIGFSCSSAHPFILI. Topologically, residues 281–309 are cytoplasmic; sequence WGNKKLKQPFLSVLWQMRYWVKGEKPSSS.

This sequence belongs to the G-protein coupled receptor T2R family.

Its subcellular location is the membrane. In terms of biological role, receptor that may play a role in the perception of bitterness and is gustducin-linked. May play a role in sensing the chemical composition of the gastrointestinal content. The activity of this receptor may stimulate alpha gustducin, mediate PLC-beta-2 activation and lead to the gating of TRPM5. This Pan paniscus (Pygmy chimpanzee) protein is Taste receptor type 2 member 66 (TAS2R66).